A 240-amino-acid polypeptide reads, in one-letter code: MHPTEPPFQRIQFYLTAQYDCSYLPGRLARSQVATPTHLIDHHAYGALIRAGFRRSGQFTYRPNCEGCQACVPVRVDVSGFVPNRTQRRCLKRNRGLAARFLPLDFKDEHYALYRAYLGSRHAGGGMDRDGPEQYTQFLLSSNVDSVLVEFRDGDAVVMVAVIDQVDDGLSAVYTFFDPAREQDSLGVYGVLWQIELAKRLDLPYLYLGYWIGESRKMAYKKQYPPLQGLVDGSWQALEA.

This sequence belongs to the R-transferase family. Bpt subfamily.

The protein resides in the cytoplasm. The enzyme catalyses N-terminal L-glutamyl-[protein] + L-leucyl-tRNA(Leu) = N-terminal L-leucyl-L-glutamyl-[protein] + tRNA(Leu) + H(+). It carries out the reaction N-terminal L-aspartyl-[protein] + L-leucyl-tRNA(Leu) = N-terminal L-leucyl-L-aspartyl-[protein] + tRNA(Leu) + H(+). Functions in the N-end rule pathway of protein degradation where it conjugates Leu from its aminoacyl-tRNA to the N-termini of proteins containing an N-terminal aspartate or glutamate. The polypeptide is Aspartate/glutamate leucyltransferase (Thiobacillus denitrificans (strain ATCC 25259 / T1)).